A 284-amino-acid chain; its full sequence is tRNA uridine(34) hydroxylase (284 aa).

The Rhodanese domain maps to 132–226 (TGRPVVMLDT…YFEEVGGAHY (95 aa)). Cys-186 serves as the catalytic Cysteine persulfide intermediate.

This sequence belongs to the TrhO family.

It catalyses the reaction uridine(34) in tRNA + AH2 + O2 = 5-hydroxyuridine(34) in tRNA + A + H2O. Its function is as follows. Catalyzes oxygen-dependent 5-hydroxyuridine (ho5U) modification at position 34 in tRNAs. The polypeptide is tRNA uridine(34) hydroxylase (Burkholderia lata (strain ATCC 17760 / DSM 23089 / LMG 22485 / NCIMB 9086 / R18194 / 383)).